The following is a 269-amino-acid chain: Formamidopyrimidine-DNA glycosylase (269 aa).

The Schiff-base intermediate with DNA role is filled by Pro2. Glu3 acts as the Proton donor in catalysis. Catalysis depends on Lys57, which acts as the Proton donor; for beta-elimination activity. Positions 90, 109, and 150 each coordinate DNA. Residues Gln235–Lys269 form an FPG-type zinc finger. Arg259 (proton donor; for delta-elimination activity) is an active-site residue.

This sequence belongs to the FPG family. Monomer. Requires Zn(2+) as cofactor.

The catalysed reaction is Hydrolysis of DNA containing ring-opened 7-methylguanine residues, releasing 2,6-diamino-4-hydroxy-5-(N-methyl)formamidopyrimidine.. It carries out the reaction 2'-deoxyribonucleotide-(2'-deoxyribose 5'-phosphate)-2'-deoxyribonucleotide-DNA = a 3'-end 2'-deoxyribonucleotide-(2,3-dehydro-2,3-deoxyribose 5'-phosphate)-DNA + a 5'-end 5'-phospho-2'-deoxyribonucleoside-DNA + H(+). Functionally, involved in base excision repair of DNA damaged by oxidation or by mutagenic agents. Acts as a DNA glycosylase that recognizes and removes damaged bases. Has a preference for oxidized purines, such as 7,8-dihydro-8-oxoguanine (8-oxoG). Has AP (apurinic/apyrimidinic) lyase activity and introduces nicks in the DNA strand. Cleaves the DNA backbone by beta-delta elimination to generate a single-strand break at the site of the removed base with both 3'- and 5'-phosphates. This is Formamidopyrimidine-DNA glycosylase from Shigella dysenteriae serotype 1 (strain Sd197).